Here is a 169-residue protein sequence, read N- to C-terminus: Myosin regulatory light chain 11 (169 aa).

Ala-2 is subject to N,N,N-trimethylalanine. Phosphoserine occurs at positions 15 and 16. Phosphothreonine occurs at positions 25 and 35. Positions 25–60 (TQIQEFKEAFTVIDQNRDGIIDKEDLRDTFAAMGRL) constitute an EF-hand 1 domain. Residues Asp-38, Asn-40, Asp-42, and Asp-49 each contribute to the Ca(2+) site. Ser-75 is modified (phosphoserine). EF-hand domains follow at residues 95 to 130 (DPED…QCDR) and 131 to 166 (FSQE…GDAK). A Phosphothreonine modification is found at Thr-101.

In terms of assembly, myosin is a hexamer of 2 heavy chains and 4 light chains.

Myosin regulatory subunit that plays an essential role to maintain muscle integrity during early development. Plays a role in regulation of muscle contraction. This is Myosin regulatory light chain 11 (Myl11) from Mus musculus (Mouse).